We begin with the raw amino-acid sequence, 254 residues long: Ribosomal RNA small subunit methyltransferase J (254 aa).

S-adenosyl-L-methionine is bound by residues 107–108, 123–124, and D174; these read RD and ER.

The protein belongs to the methyltransferase superfamily. RsmJ family.

The protein localises to the cytoplasm. The enzyme catalyses guanosine(1516) in 16S rRNA + S-adenosyl-L-methionine = N(2)-methylguanosine(1516) in 16S rRNA + S-adenosyl-L-homocysteine + H(+). Its function is as follows. Specifically methylates the guanosine in position 1516 of 16S rRNA. This chain is Ribosomal RNA small subunit methyltransferase J, found in Coxiella burnetii (strain Dugway 5J108-111).